A 215-amino-acid polypeptide reads, in one-letter code: Ras-related protein RAB1BV (215 aa).

Residues 22–29 (GDSGVGKS), 70–74 (DTAGQ), and 128–131 (NKAD) contribute to the GTP site. The interval 183–215 (DSDTRQEAQPSITIKPADQSGNQAAAKSACCGS) is disordered. 2 S-geranylgeranyl cysteine lipidation sites follow: C212 and C213.

The protein belongs to the small GTPase superfamily. Rab family.

The protein resides in the cell membrane. The chain is Ras-related protein RAB1BV (RAB1BV) from Beta vulgaris (Sugar beet).